The primary structure comprises 790 residues: Protein SEY1 (790 aa).

Over 1-692 the chain is Cytoplasmic; it reads MELSEGELSH…KRSIVQHITQ (692 aa). The 230-residue stretch at 55 to 284 folds into the GB1/RHD3-type G domain; sequence GNNYHIISVF…VSNELFKPEY (230 aa). 65–72 contributes to the GTP binding site; sequence GSQSTGKS. The chain crosses the membrane as a helical span at residues 693–713; that stretch reads IPYYIYLIILVLGWNEFMAII. The Lumenal portion of the chain corresponds to 714-716; sequence RNP. Residues 717–737 traverse the membrane as a helical segment; that stretch reads LFFSLSIVLGATVYVLYYLGL. The Cytoplasmic segment spans residues 738–790; sequence LRPALVVAQRTMDEVIVMAKTKLREVLIDDHEVTGRQLNKMAGSKENIELDDM.

This sequence belongs to the TRAFAC class dynamin-like GTPase superfamily. GB1/RHD3 GTPase family. RHD3 subfamily.

It localises to the endoplasmic reticulum membrane. Functionally, cooperates with the reticulon proteins and tubule-shaping DP1 family proteins to generate and maintain the structure of the tubular endoplasmic reticulum network. Has GTPase activity, which is required for its function in ER organization. Required for virulence and resistance to cycloheximide. The sequence is that of Protein SEY1 from Candida albicans (strain SC5314 / ATCC MYA-2876) (Yeast).